A 127-amino-acid polypeptide reads, in one-letter code: EF-hand calcium-binding domain-containing protein 10 (127 aa).

Residues 63–98 (MDNSNIVAMFEMMDSSGRGTISFVQYKEALKTLGLC) form the EF-hand domain.

The polypeptide is EF-hand calcium-binding domain-containing protein 10 (EFCAB10) (Homo sapiens (Human)).